Reading from the N-terminus, the 470-residue chain is MATTRVYLHTLGCPKNRVDSEVMLGTLTGAGYRLERDPAQADVIVVNTCGFIESAKEESVDAIVELAGMKQEGRCKKLVVTGCLVQRHAEELSAELPEVDHFLGTGAYAEIARVVSDAQAKRLVVPDPDFVHSAATPRVNSLPSHTAYLKISEGCDNACAFCIIPKLRGAQRSRPVDDVVAEAAALAAQGTVELSLVAQDLTAYGYDLPGKVRLHHLLPELCKVDGIRWLRLHYAYPRDVPDALVEVIAREPKIVKYLDMPLQHSSDRLLRSMKRGRDSVFLRELLARLRARVPGIALRTSLIVGLPGETEEDFEDLVRFVEEQRFERLGVFEFSPEDGTPAADMAEQVPDVVKRARRDRIMALQQEISREHQRAMVGRRLEVLVEGRAEETEHLLAGRHAQQAPEIDGITYVNDGVAYPGELVTVEITDASEYDLVGHVVARDPERARRPLPAPAGGETPRRGGLPVVG.

One can recognise an MTTase N-terminal domain in the interval T4–A120. Residues C13, C49, C83, C155, C159, and C162 each contribute to the [4Fe-4S] cluster site. The region spanning S141–E371 is the Radical SAM core domain. A TRAM domain is found at R374–A442. A disordered region spans residues R447–G470.

This sequence belongs to the methylthiotransferase family. RimO subfamily. It depends on [4Fe-4S] cluster as a cofactor.

The protein resides in the cytoplasm. It carries out the reaction L-aspartate(89)-[ribosomal protein uS12]-hydrogen + (sulfur carrier)-SH + AH2 + 2 S-adenosyl-L-methionine = 3-methylsulfanyl-L-aspartate(89)-[ribosomal protein uS12]-hydrogen + (sulfur carrier)-H + 5'-deoxyadenosine + L-methionine + A + S-adenosyl-L-homocysteine + 2 H(+). Catalyzes the methylthiolation of an aspartic acid residue of ribosomal protein uS12. The polypeptide is Ribosomal protein uS12 methylthiotransferase RimO (Anaeromyxobacter sp. (strain Fw109-5)).